The chain runs to 718 residues: Polyribonucleotide nucleotidyltransferase (718 aa).

2 residues coordinate Mg(2+): Asp491 and Asp497. A KH domain is found at 558–617 (PRMLTIKINPEKIRDVIGKGGATIRALTEETGTQIDISDDGTIVIASVDEGQAKEAQRRI). The S1 motif domain occupies 627-695 (GQVYDGSVLR…EKGRLRLSVK (69 aa)).

It belongs to the polyribonucleotide nucleotidyltransferase family. It depends on Mg(2+) as a cofactor.

The protein localises to the cytoplasm. It catalyses the reaction RNA(n+1) + phosphate = RNA(n) + a ribonucleoside 5'-diphosphate. In terms of biological role, involved in mRNA degradation. Catalyzes the phosphorolysis of single-stranded polyribonucleotides processively in the 3'- to 5'-direction. The protein is Polyribonucleotide nucleotidyltransferase of Bordetella avium (strain 197N).